Here is a 217-residue protein sequence, read N- to C-terminus: Large ribosomal subunit protein eL14 (217 aa).

N6-acetyllysine is present on Lys79. At Lys85 the chain carries N6-acetyllysine; alternate. Lys85 is modified (N6-succinyllysine; alternate). A Glycyl lysine isopeptide (Lys-Gly) (interchain with G-Cter in SUMO2) cross-link involves residue Lys124. Ser139 is modified (phosphoserine). The disordered stretch occupies residues 162–217; sequence KVPAKKATGPGKKAAGQKAPAQKAAGQKAAPPAKGQKGQKTPAQKAPAPKAAGKKA. A 1-1; approximate repeat occupies 173–177; the sequence is KKAAG. The segment at 173-192 is 4 X 5 AA tandem repeats of Q-K-A-[APS]-X; that stretch reads KKAAGQKAPAQKAAGQKAAP. Repeat copies occupy residues 178–182, 183–187, 188–192, 195–197, and 198–200. The 2 X 3 AA tandem repeats of K-G-Q stretch occupies residues 195–200; that stretch reads KGQKGQ. Lys206 is subject to N6-succinyllysine.

The protein belongs to the eukaryotic ribosomal protein eL14 family. As to quaternary structure, component of the large ribosomal subunit.

The protein localises to the cytoplasm. In terms of biological role, component of the large ribosomal subunit. The ribosome is a large ribonucleoprotein complex responsible for the synthesis of proteins in the cell. This chain is Large ribosomal subunit protein eL14 (Rpl14), found in Mus musculus (Mouse).